The sequence spans 304 residues: MSPRDDIPDLKGFDGDGEGSVQVHDSEDIGLDVGGARVFSVYGKGGIGKSTTSSNLSAAFSLLGKRVLQIGCDPKHDSTFTLTGRLQETVIDILKQVNFHPEELRPEDYVTEGFNGVMCVEAGGPPAGTGCGGYVVGQTVKLLKQHHLLEDTDVVVFDVLGDVVCGGFAAPLQHADRALIVTANDFDSIYAMNRIIAAVQAKSVNYKVRLAGCVANRSRETNEVDRYCEAANFKRIAHMPDLDSIRRSRLKKRTLFEMDDAEDVVMARAEYIRLAETLWRSTGEPGLTPEPLTDRHIFELLGFD.

Residues 46–51 (GIGKST) and Lys75 contribute to the ATP site. Residue Ser50 participates in Mg(2+) binding. Residues Cys131 and Cys165 each contribute to the [4Fe-4S] cluster site. ATP-binding positions include 216–217 (NR) and 240–242 (PDL).

Belongs to the NifH/BchL/ChlL family. Homodimer. Protochlorophyllide reductase is composed of three subunits; BchL, BchN and BchB. It depends on [4Fe-4S] cluster as a cofactor.

It carries out the reaction chlorophyllide a + oxidized 2[4Fe-4S]-[ferredoxin] + 2 ADP + 2 phosphate = protochlorophyllide a + reduced 2[4Fe-4S]-[ferredoxin] + 2 ATP + 2 H2O. It functions in the pathway porphyrin-containing compound metabolism; bacteriochlorophyll biosynthesis (light-independent). Its function is as follows. Component of the dark-operative protochlorophyllide reductase (DPOR) that uses Mg-ATP and reduced ferredoxin to reduce ring D of protochlorophyllide (Pchlide) to form chlorophyllide a (Chlide). This reaction is light-independent. The L component serves as a unique electron donor to the NB-component of the complex, and binds Mg-ATP. The chain is Light-independent protochlorophyllide reductase iron-sulfur ATP-binding protein from Rhodobacter capsulatus (strain ATCC BAA-309 / NBRC 16581 / SB1003).